We begin with the raw amino-acid sequence, 358 residues long: Presenilin hop-1 (358 aa).

At 1-12 (MPRTKRVYSGKT) the chain is on the cytoplasmic side. Residues 13-33 (ITGVLYPVAICMLFVAINVKL) traverse the membrane as a helical segment. The Lumenal portion of the chain corresponds to 34–57 (SQPEQQEQSKVVYGLFHSYDTADS). A helical membrane pass occupies residues 58-78 (GTITLYLIGFLILTTSLGVFC). Residues 79–86 (YQMKFYKA) lie on the Cytoplasmic side of the membrane. Residues 87–107 (IKVYVLANSIGILLVYSVFHF) traverse the membrane as a helical segment. At 108–115 (QRIAEAQS) the chain is on the lumenal side. Residues 116-136 (IPVSVPTFFFLILQFGGLGIT) form a helical membrane-spanning segment. Over 137 to 148 (CLHWKSHRRLHQ) the chain is Cytoplasmic. Residues 149-169 (FYLIMLAGLTAIFILNILPDW) traverse the membrane as a helical segment. Thr-170 is a topological domain (lumenal). A helical transmembrane segment spans residues 171–191 (VWMALTAISFWDIVAVLTPCG). Asp-182 is an active-site residue. At 192–273 (PLKMLVETAN…EVREVEGTIR (82 aa)) the chain is on the cytoplasmic side. Positions 221–240 (EVDSPDTTRSNSTPLTEFNN) are enriched in polar residues. The segment at 221–242 (EVDSPDTTRSNSTPLTEFNNSS) is disordered. Residues 274-294 (LGMGDFVFYSLMLGNTVQTCP) traverse the membrane as a helical segment. Residue Asp-278 is part of the active site. The Lumenal portion of the chain corresponds to 295-297 (LPT). A helical transmembrane segment spans residues 298 to 318 (VVACFVSNLVGLTITLPIVTL). The Cytoplasmic portion of the chain corresponds to 319-321 (SQT). The segment at residues 322–342 (ALPALPFPLAIAAIFYFSSHI) is an intramembrane region (helical). Residues 324-326 (PAL) carry the PAL motif. Residues 343-358 (ALTPFTDLCTSQLILI) lie on the Cytoplasmic side of the membrane.

It belongs to the peptidase A22A family. In terms of assembly, homodimer. Component of the gamma-secretase complex, a complex probably composed of the presenilin homodimer (sel-12, hop-1 or spe-4), nicastrin (aph-2), aph-1 and pen-2. In terms of tissue distribution, weakly expressed.

It localises to the endoplasmic reticulum membrane. It is found in the golgi apparatus membrane. Probable catalytic subunit of the gamma-secretase complex, an endoprotease complex that catalyzes the intramembrane cleavage of integral membrane proteins such as Notch receptors (lin-12 or glp-1). Probably works redundantly of lin-12, which provides more presenilin function. The polypeptide is Presenilin hop-1 (hop-1) (Caenorhabditis elegans).